Reading from the N-terminus, the 272-residue chain is UPF0759 protein YecE (272 aa).

Belongs to the UPF0759 family.

In Escherichia coli O157:H7, this protein is UPF0759 protein YecE (yecE).